The chain runs to 398 residues: Type III polyketide synthase pspB (398 aa).

Residues Lys-47 and 47-54 (KLLQINRS) contribute to the CoA site. Cys-152 acts as the Nucleophile in catalysis. A substrate-binding site is contributed by 214 to 215 (SD). CoA contacts are provided by residues Leu-267, Gly-321, 321–324 (GGEA), and Ala-324.

It belongs to the thiolase-like superfamily. Chalcone/stilbene synthases family. Homodimer.

The catalysed reaction is 11 malonyl-CoA + acetyl-CoA + S-adenosyl-L-methionine + 12 NADPH + 22 H(+) = soppiline B + S-adenosyl-L-homocysteine + 12 CO2 + 12 NADP(+) + 12 CoA + 8 H2O. It participates in secondary metabolite biosynthesis. Its function is as follows. Type III polyketide synthase; part of the gene cluster that mediates the biosynthesis of the alkylresorcinols called soppilines. The biosynthesis starts with the HR-PKS pspA-catalyzed carbon chain assembly through nine chain elongation cycles, using acetyl CoA and malonyl CoA as a starter and extender units, respectively, to produce the polyketide soppiline A. In the first round, the KR, DH, and CMeT domains work to produce 2-methyl-2-butenyl thioester. In rounds 2 to 5, the KR, DH, and ER domains fully catalyze the reduction of the elongated beta-ketothioester, resulting in the insertion of eight methylene units. The unusual Z,E,Z-triene motif is likely constructed during rounds 6 to 8. Typically, the DH domain introduces a double bond at an alpha,beta-position of an elongated polyketide chain, with the dehydration of a beta-hydroxy group. The last extension cycle would be carried out with L-oriented beta-ketoreduction by the KR domain to produce beta-hydroxy carboxylic acid soppiline A. The type III PKS pspB intercepts the elongated polyketide chain at round 8 from the HR-PKS pspA, followed by a tri-keto extension and decarboxylative aldol cyclization to produce 1,3,5-trisubstituted alkylresorcinol soppiline B. Subsequently, the cytochrome P450 monooxygenase pspC catalyzes three-step oxidations at the C-4 methyl group to carboxylic acid to yield soppiline C. This Penicillium soppii protein is Type III polyketide synthase pspB.